A 238-amino-acid polypeptide reads, in one-letter code: Ribitol-5-phosphate cytidylyltransferase 2 (238 aa).

Residues leucine 7–glycine 10 and glycine 81–threonine 87 contribute to the CTP site.

This sequence belongs to the IspD/TarI cytidylyltransferase family. TarI subfamily. In terms of assembly, heterodimer together with TarJ.

It carries out the reaction D-ribitol 5-phosphate + CTP + H(+) = CDP-L-ribitol + diphosphate. The protein operates within cell wall biogenesis; poly(ribitol phosphate) teichoic acid biosynthesis. In terms of biological role, catalyzes the transfer of the cytidylyl group of CTP to D-ribitol 5-phosphate. The sequence is that of Ribitol-5-phosphate cytidylyltransferase 2 from Staphylococcus aureus (strain NCTC 8325 / PS 47).